Reading from the N-terminus, the 926-residue chain is Storkhead-box protein 2 (926 aa).

Disordered stretches follow at residues 1–32 (MKKTRSTTLRRAWPSSDFSDRASDRMRSRSEK), 338–393 (EEEK…DIPG), 452–529 (EMPF…SYID), 564–586 (KEPSSACSLLEPGKTPESMPSYG), 633–693 (VKKL…SLDK), 723–802 (LLKS…VGTM), and 823–926 (TLLT…VTSV). The span at 18–32 (FSDRASDRMRSRSEK) shows a compositional bias: basic and acidic residues. Over residues 353–378 (HSGRSKKSRTHRKSHGKSRSHSKTRV) the composition is skewed to basic residues. Over residues 379 to 393 (SKGDPSDGSHLDIPG) the composition is skewed to basic and acidic residues. Positions 463–472 (SHSKVHRSHS) are enriched in basic residues. Residues 473-495 (HTQDRRSRNERSNKAKERSRSMD) show a composition bias toward basic and acidic residues. Positions 518 to 529 (QDDQTPSQSYID) are enriched in polar residues. Composition is skewed to basic and acidic residues over residues 633-658 (VKKLSPSERQTPHSSREPVGHKEESP) and 684-693 (HSAEPSSLDK). A compositionally biased stretch (polar residues) spans 746–769 (LGTSAAQAMPPSQRQQEPGGNQEA). Over residues 785–799 (GANKNAEEEKNRDDV) the composition is skewed to basic and acidic residues. Composition is skewed to polar residues over residues 847-884 (MDSSSITVDSGFNSPRTRESLASNTSSIVESNRRQNPA) and 914-926 (KPSNCLQASVTSV).

This is Storkhead-box protein 2 (Stox2) from Mus musculus (Mouse).